A 694-amino-acid polypeptide reads, in one-letter code: Frizzled-8 (694 aa).

Positions 1-27 are cleaved as a signal peptide; it reads MEWGYLLEVTSLLAALALLQRSSGAAA. Topologically, residues 28-275 are extracellular; that stretch reads ASAKELACQE…NPFFSQDERA (248 aa). An FZ domain is found at 30–151; sequence AKELACQEIT…GNPDTLCMDY (122 aa). Intrachain disulfides connect Cys35–Cys96, Cys43–Cys89, Cys80–Cys118, Cys107–Cys148, and Cys111–Cys135. Residue Asn49 is glycosylated (N-linked (GlcNAc...) asparagine). A hexadecanoate-binding site is contributed by 71 to 78; it reads QFWPLVEI. Residues 95-100 form a wnt-binding region; the sequence is ICLEDY. The segment at 147 to 152 is wnt-binding; that stretch reads LCMDYN. Residue Asn152 is glycosylated (N-linked (GlcNAc...) asparagine). Residues 155–226 are disordered; the sequence is DLTTAAPSPP…KARPPGGGAA (72 aa). The segment covering 161 to 175 has biased composition (pro residues); the sequence is PSPPRRLPPPPPGEQ. Residues 176–186 are compositionally biased toward low complexity; it reads PPSGSGHGRPP. A compositionally biased stretch (gly residues) spans 210-225; the sequence is RGGGGGGKARPPGGGA. The helical transmembrane segment at 276–296 threads the bilayer; that stretch reads FTVFWIGLWSVLCFVSTFATV. At 297 to 312 the chain is on the cytoplasmic side; the sequence is STFLIDMERFKYPERP. Residues 313–333 form a helical membrane-spanning segment; that stretch reads IIFLSACYLFVSVGYLVRLVA. Over 334 to 396 the chain is Extracellular; that stretch reads GHEKVACSGG…RYETTGPALC (63 aa). A helical membrane pass occupies residues 397–417; the sequence is TVVFLLVYFFGMASSIWWVIL. Residues 418-439 are Cytoplasmic-facing; it reads SLTWFLAAGMKWGNEAIAGYSQ. The chain crosses the membrane as a helical span at residues 440-460; it reads YFHLAAWLVPSVKSIAVLALS. Residues 461 to 483 are Extracellular-facing; it reads SVDGDPVAGICYVGNQSLDNLRG. Asn475 carries an N-linked (GlcNAc...) asparagine glycan. The chain crosses the membrane as a helical span at residues 484-504; the sequence is FVLAPLVIYLFIGTMFLLAGF. Over 505–532 the chain is Cytoplasmic; sequence VSLFRIRSVIKQQDGPTKTHKLEKLMIR. A helical membrane pass occupies residues 533–553; sequence LGLFTVLYTVPAAVVVACLFY. Residues 554–584 are Extracellular-facing; sequence EQHNRPRWEATHNCPCLRDLQPDQARRPDYA. A helical transmembrane segment spans residues 585–605; that stretch reads VFMLKYFMCLVVGITSGVWVW. Topologically, residues 606–694 are cytoplasmic; it reads SGKTLESWRS…YPKQMPLSQV (89 aa). A Lys-Thr-X-X-X-Trp motif, mediates interaction with the PDZ domain of Dvl family members motif is present at residues 608 to 613; the sequence is KTLESW. Positions 648-664 are enriched in gly residues; sequence GGGGPGGGGGPGGGGGS. Positions 648-668 are disordered; it reads GGGGPGGGGGPGGGGGSLYSD. Positions 692–694 match the PDZ-binding motif; sequence SQV.

It belongs to the G-protein coupled receptor Fz/Smo family. As to quaternary structure, component of a Wnt-signaling complex that contains a WNT protein, a FZD protein and LRP5 or LRP6. Interacts directly with LRP5 or LRP6; the interaction is promoted by Wnt-binding and signaling and inhibited by DKK1. Interacts with GPOC, RSPO1 and RSPO3. Interacts with glypican GPC3. In terms of processing, ubiquitinated by ZNRF3, leading to its degradation by the proteasome. In terms of tissue distribution, most abundant in fetal kidney, followed by brain and lung. In adult tissues, expressed in kidney, heart, pancreas and skeletal muscle.

It is found in the membrane. It localises to the golgi apparatus. Its subcellular location is the cell membrane. In terms of biological role, receptor for Wnt proteins. Component of the Wnt-Fzd-LRP5-LRP6 complex that triggers beta-catenin signaling through inducing aggregation of receptor-ligand complexes into ribosome-sized signalosomes. The beta-catenin canonical signaling pathway leads to the activation of disheveled proteins, inhibition of GSK-3 kinase, nuclear accumulation of beta-catenin and activation of Wnt target genes. A second signaling pathway involving PKC and calcium fluxes has been seen for some family members, but it is not yet clear if it represents a distinct pathway or if it can be integrated in the canonical pathway, as PKC seems to be required for Wnt-mediated inactivation of GSK-3 kinase. Both pathways seem to involve interactions with G-proteins. May be involved in transduction and intercellular transmission of polarity information during tissue morphogenesis and/or in differentiated tissues. Coreceptor along with RYK of Wnt proteins, such as WNT1. This Homo sapiens (Human) protein is Frizzled-8 (FZD8).